The chain runs to 261 residues: Cytochrome c oxidase subunit 3 (261 aa).

Over 1 to 15 (MTHQTHAYHMVNPSP) the chain is Mitochondrial matrix. Residues 16 to 34 (WPLTGALSALLMTSGLIMW) form a helical membrane-spanning segment. At 35 to 40 (FHFNST) the chain is on the mitochondrial intermembrane side. Residues 41–66 (TLLMLGLTTNMLTMYQWWRDVVREST) form a helical membrane-spanning segment. At 67-72 (FQGHHT) the chain is on the mitochondrial matrix side. Residues 73 to 105 (PNVQKGLRYGMILFIISEVLFFTGFFWAFYHSS) form a helical membrane-spanning segment. Residues 106-128 (LAPTPELGGCWPPTGIHPLNPLE) are Mitochondrial intermembrane-facing. Residues 129–152 (VPLLNTSVLLASGVSITWAHHSLM) traverse the membrane as a helical segment. The Mitochondrial matrix portion of the chain corresponds to 153–155 (EGN). A helical membrane pass occupies residues 156–183 (RNHMLQALFITIALGVYFTLLQASEYYE). Residues 184–190 (APFTISD) are Mitochondrial intermembrane-facing. The helical transmembrane segment at 191–223 (GVYGSTFFVATGFHGLHVIIGSTFLIVCFFRQL) threads the bilayer. Over 224–232 (KFHFTSSHH) the chain is Mitochondrial matrix. A helical transmembrane segment spans residues 233-256 (FGFEAAAWYWHFVDVVWLFLYVSI). The Mitochondrial intermembrane portion of the chain corresponds to 257 to 261 (YWWGS).

It belongs to the cytochrome c oxidase subunit 3 family. Component of the cytochrome c oxidase (complex IV, CIV), a multisubunit enzyme composed of 14 subunits. The complex is composed of a catalytic core of 3 subunits MT-CO1, MT-CO2 and MT-CO3, encoded in the mitochondrial DNA, and 11 supernumerary subunits COX4I, COX5A, COX5B, COX6A, COX6B, COX6C, COX7A, COX7B, COX7C, COX8 and NDUFA4, which are encoded in the nuclear genome. The complex exists as a monomer or a dimer and forms supercomplexes (SCs) in the inner mitochondrial membrane with NADH-ubiquinone oxidoreductase (complex I, CI) and ubiquinol-cytochrome c oxidoreductase (cytochrome b-c1 complex, complex III, CIII), resulting in different assemblies (supercomplex SCI(1)III(2)IV(1) and megacomplex MCI(2)III(2)IV(2)).

It localises to the mitochondrion inner membrane. The catalysed reaction is 4 Fe(II)-[cytochrome c] + O2 + 8 H(+)(in) = 4 Fe(III)-[cytochrome c] + 2 H2O + 4 H(+)(out). Its function is as follows. Component of the cytochrome c oxidase, the last enzyme in the mitochondrial electron transport chain which drives oxidative phosphorylation. The respiratory chain contains 3 multisubunit complexes succinate dehydrogenase (complex II, CII), ubiquinol-cytochrome c oxidoreductase (cytochrome b-c1 complex, complex III, CIII) and cytochrome c oxidase (complex IV, CIV), that cooperate to transfer electrons derived from NADH and succinate to molecular oxygen, creating an electrochemical gradient over the inner membrane that drives transmembrane transport and the ATP synthase. Cytochrome c oxidase is the component of the respiratory chain that catalyzes the reduction of oxygen to water. Electrons originating from reduced cytochrome c in the intermembrane space (IMS) are transferred via the dinuclear copper A center (CU(A)) of subunit 2 and heme A of subunit 1 to the active site in subunit 1, a binuclear center (BNC) formed by heme A3 and copper B (CU(B)). The BNC reduces molecular oxygen to 2 water molecules using 4 electrons from cytochrome c in the IMS and 4 protons from the mitochondrial matrix. The protein is Cytochrome c oxidase subunit 3 (MT-CO3) of Gazella spekei (Speke's gazelle).